A 237-amino-acid polypeptide reads, in one-letter code: Protein set homolog (237 aa).

A compositionally biased stretch (polar residues) spans 141 to 152; it reads ELSQEVKISTTP. Disordered regions lie at residues 141 to 182 and 214 to 237; these read ELSQ…DEDD and SFCN…EEDK. Basic and acidic residues predominate over residues 156 to 173; the sequence is KQNKTETEKKNKDSKKST.

This sequence belongs to the nucleosome assembly protein (NAP) family.

The sequence is that of Protein set homolog (set) from Dictyostelium discoideum (Social amoeba).